We begin with the raw amino-acid sequence, 751 residues long: WD repeat-containing protein 91 (751 aa).

Residues 188–212 (IQEENESLRHKLFALQAESSRMKKE) are a coiled coil. The interval 264–395 (LSQSKKGPAR…ASSTESVGVR (132 aa)) is disordered. Over residues 278–287 (SGASPTQTGS) the composition is skewed to polar residues. The span at 334-346 (RLQEHGKERRELL) shows a compositional bias: basic and acidic residues. The span at 377–391 (QAETSTKMPASSTES) shows a compositional bias: polar residues. WD repeat units follow at residues 410-449 (EHHSSIMYCRVDCSGRRVASLDVDGVIKVWSFNPIMQTKA), 452-492 (ISKS…NLCE), 497-559 (EDMP…QQLQ), 564-603 (PEPIAINCTAFNHNGNLLVTGAADGIVRLFDMQQHECAMS), 606-645 (AHDGEVYSVEFSYDENTVYSIGEDGKFIQWNIHKSGLKIS), 668-706 (VQFPRGRLFAFDSEGNYMLTCSSTGGVIFKLNGEDKVLE), and 713-751 (GHRAPVVTVDWSTAMDCGTCLTASMDGKIKLTTLLAQKS).

Belongs to the WD repeat WDR91 family.

The protein localises to the early endosome membrane. It localises to the late endosome membrane. Its function is as follows. Functions as a negative regulator of the PI3 kinase/PI3K activity associated with endosomal membranes. By modifying the phosphatidylinositol 3-phosphate/PtdInsP3 content of endosomal membranes may regulate endosome fusion, recycling, sorting and early to late endosome transport. The polypeptide is WD repeat-containing protein 91 (Gallus gallus (Chicken)).